The sequence spans 291 residues: GTP-binding protein RHO4 (291 aa).

Over residues 14–31 the composition is skewed to polar residues; the sequence is GNESNIVSQGSPSSSNLP. Positions 14 to 45 are disordered; it reads GNESNIVSQGSPSSSNLPESPGTLDEKNLPRL. 79–86 is a GTP binding site; the sequence is GDGAVGKT. The Effector region signature appears at 101-109; sequence YIPTIFENY. Residues 127–131 and 185–188 contribute to the GTP site; these read DTAGQ and LKSD. The interval 250–273 is disordered; that stretch reads THTIKNPFKRNTTRSDIDSSTGDT. Phosphoserine is present on residues Ser264, Ser268, and Ser276. The residue at position 288 (Cys288) is a Cysteine methyl ester. The S-farnesyl cysteine moiety is linked to residue Cys288. Positions 289-291 are cleaved as a propeptide — removed in mature form; it reads IIM.

It belongs to the small GTPase superfamily. Rho family. Interacts with BEM4.

It localises to the cell membrane. It carries out the reaction GTP + H2O = GDP + phosphate + H(+). Functionally, plays an important role in cell growth. Required to keep the uninucleated state. May be involved in the organization of the cytoskeleton which affects microtubule functions. Most likely RHO3 and RHO4 of S.cerevisiae regulate partially overlapping but different pathways. This chain is GTP-binding protein RHO4 (RHO4), found in Saccharomyces cerevisiae (strain ATCC 204508 / S288c) (Baker's yeast).